The sequence spans 116 residues: Anti-sigma F factor antagonist (116 aa).

One can recognise an STAS domain in the interval 3–113 (LAIDLEVKKD…ESEQYALHRL (111 aa)). At Ser-58 the chain carries Phosphoserine.

The protein belongs to the anti-sigma-factor antagonist family. Phosphorylated by SpoIIAB on a serine residue.

Its function is as follows. In the phosphorylated form it could act as an anti-anti-sigma factor that counteracts SpoIIAB and thus releases sigma f from inhibition. The polypeptide is Anti-sigma F factor antagonist (spoIIAA) (Heyndrickxia coagulans (Weizmannia coagulans)).